Reading from the N-terminus, the 119-residue chain is Small ribosomal subunit protein bS6 (119 aa).

Residues 96 to 119 (VTEPSPLARSQEKDEEEGGRTAEA) form a disordered region.

This sequence belongs to the bacterial ribosomal protein bS6 family.

In terms of biological role, binds together with bS18 to 16S ribosomal RNA. This Alkalilimnicola ehrlichii (strain ATCC BAA-1101 / DSM 17681 / MLHE-1) protein is Small ribosomal subunit protein bS6.